The following is a 391-amino-acid chain: Adhesion defective protein 1 (391 aa).

Polar residues predominate over residues 180 to 190 (SQSRPPQNQIQ). Disordered regions lie at residues 180-217 (SQSRPPQNQIQHDGVKSEDPSSESVNINSSSSLLPDSP) and 366-391 (VEGENPNNNPNFYSSDMLNAQKRTKV). A compositionally biased stretch (low complexity) spans 201–211 (SESVNINSSSS). A compositionally biased stretch (polar residues) spans 370-383 (NPNNNPNFYSSDML).

This sequence belongs to the adn1/SEU family.

The protein localises to the nucleus. Probable transcriptional regulator involved in cell adhesion. In Schizosaccharomyces pombe (strain 972 / ATCC 24843) (Fission yeast), this protein is Adhesion defective protein 1 (adn1).